Reading from the N-terminus, the 1033-residue chain is Integrin alpha-IIb (1033 aa).

An N-terminal signal peptide occupies residues 1-31 (MARASCAWHSLWLLQWTPLFLGPSAVPPVWA). Topologically, residues 32 to 988 (LNLDSEKFSV…TQLLRALEER (957 aa)) are extracellular. FG-GAP repeat units lie at residues 35-96 (DSEK…GGKC), 109-173 (NLGF…GRAE), 184-237 (SVYA…ISSY), 252-304 (TYDN…DSYY), 305-370 (QPLH…PQAL), 372-431 (TPTL…GLSP), and 434-495 (SQVL…VQDS). N-linked (GlcNAc...) asparagine glycans are attached at residues asparagine 46 and asparagine 75. 3 cysteine pairs are disulfide-bonded: cysteine 87-cysteine 96, cysteine 138-cysteine 161, and cysteine 177-cysteine 197. Residues glutamate 273, aspartate 275, aspartate 277, threonine 280, glutamate 282, aspartate 327, asparagine 329, aspartate 331, arginine 333, aspartate 335, aspartate 395, aspartate 399, tyrosine 401, aspartate 403, aspartate 456, aspartate 458, asparagine 460, tyrosine 462, and aspartate 464 each contribute to the Ca(2+) site. Disulfide bonds link cysteine 503–cysteine 514 and cysteine 520–cysteine 575. A glycan (N-linked (GlcNAc...) asparagine) is linked at asparagine 600. 4 cysteine pairs are disulfide-bonded: cysteine 632–cysteine 638, cysteine 704–cysteine 717, cysteine 856–cysteine 916, and cysteine 905–cysteine 911. The N-linked (GlcNAc...) asparagine glycan is linked to asparagine 710. The N-linked (GlcNAc...) asparagine glycan is linked to asparagine 957. Residues 989–1014 (AIPVWWVLVGVLGGLLLLTLLVLAMW) form a helical membrane-spanning segment. The Cytoplasmic segment spans residues 1015 to 1033 (KAGFFKRNRPPLEEDEEEE). Positions 1017 to 1021 (GFFKR) match the GFFKR motif motif.

Belongs to the integrin alpha chain family. Heterodimer of an alpha and a beta subunit. The alpha subunit is composed of a heavy and a light chain linked by a disulfide bond. Alpha-IIb associates with beta-3. Directly interacts with RNF181. Interacts (via C-terminus cytoplasmic tail region) with CIB1; the interaction is direct and calcium-dependent. Interacts (via C-terminus cytoplasmic tail region) with CIB2, CIB3 and CIB4; the interactions are stabilized/increased in a calcium and magnesium-dependent manner. ITGA2B:ITGB3 interacts with PPIA/CYPA; the interaction is ROS and PPIase activity-dependent and is increased in the presence of thrombin. ITGA2B:ITGB3 interacts with SELP (via C-type lectin domain); the interaction mediates cell-cell interaction and adhesion. Post-translationally, cleaved by ELANE; the cleavage promotes activation of platelet fibrinogen receptor integrin alpha-IIb/beta-3.

It localises to the membrane. Functionally, integrin alpha-IIb/beta-3 is a receptor for fibronectin, fibrinogen, plasminogen, prothrombin, thrombospondin and vitronectin. It recognizes the sequence R-G-D in a wide array of ligands. It recognizes the sequence H-H-L-G-G-G-A-K-Q-A-G-D-V in fibrinogen gamma chain. Following activation integrin alpha-IIb/beta-3 brings about platelet/platelet interaction through binding of soluble fibrinogen. This step leads to rapid platelet aggregation which physically plugs ruptured endothelial cell surface. This Mus musculus (Mouse) protein is Integrin alpha-IIb (Itga2b).